We begin with the raw amino-acid sequence, 559 residues long: D-2-hydroxyglutarate dehydrogenase, mitochondrial (559 aa).

A mitochondrion-targeting transit peptide spans 1–78 (MMMQKLRRSG…GMLLQQYKCF (78 aa)). The FAD-binding PCMH-type domain maps to 130–309 (YKGSSKLMLL…TKVSILTQPK (180 aa)).

This sequence belongs to the FAD-binding oxidoreductase/transferase type 4 family. Homodimer. Requires FAD as cofactor.

It is found in the mitochondrion. The enzyme catalyses (R)-2-hydroxyglutarate + A = 2-oxoglutarate + AH2. Catalyzes the oxidation of (R)-2-hydroxyglutarate to 2-oxoglutarate. May be involved in the catabolism of propionyl-CoA derived from beta-oxidation. Involved in degradation of lysine for the supply of carbon and electrons to the ETF/ETFQO complex during dark-induced sugar starvation. The protein is D-2-hydroxyglutarate dehydrogenase, mitochondrial (D2HGDH) of Arabidopsis thaliana (Mouse-ear cress).